The sequence spans 119 residues: Large ribosomal subunit protein bL20 (119 aa).

Belongs to the bacterial ribosomal protein bL20 family.

Its function is as follows. Binds directly to 23S ribosomal RNA and is necessary for the in vitro assembly process of the 50S ribosomal subunit. It is not involved in the protein synthesizing functions of that subunit. In Chloroflexus aggregans (strain MD-66 / DSM 9485), this protein is Large ribosomal subunit protein bL20.